Here is a 1123-residue protein sequence, read N- to C-terminus: Nicotinic receptor-associated protein 4 (1123 aa).

The first 18 residues, 1-18 (MGSLPLILLSLLLPGALA), serve as a signal peptide directing secretion. Residues 19-1071 (NVYSCAGSVK…TSSKRANDVD (1053 aa)) are Lumenal-facing. The chain crosses the membrane as a helical span at residues 1072-1092 (ISVGTFLSLPFFVTLALVFFN). The Cytoplasmic portion of the chain corresponds to 1093–1123 (QNRVLELLGTFIDWARNTFAPTADNHHRKRK).

In terms of assembly, may interact with nra-2 in the ER. Expressed in body wall, pharyngeal, uterine and vulval muscles, motor neurons, nerve ring, motor and ventral cord neurons, hypodermal cells in the tail, vulval epithelium and intestine.

The protein resides in the endoplasmic reticulum membrane. Involved in the recognition and selection of protein complexes to exit the endoplasmic reticulum (ER). In muscles, regulates levamisole-sensitive nicotinic acetylcholine receptor (L-AChR) subunit composition, possibly by allowing only specific L-AChR subunit combinations to exit the ER. Specifically, may promote the inclusion of alpha subunit unc-38 into and the exclusion of unc-29 from L-AChR. Regulates L-AChR sensitivity to agonists such as nicotine and levamisole at neuro-muscular junctions. The protein is Nicotinic receptor-associated protein 4 of Caenorhabditis elegans.